A 354-amino-acid chain; its full sequence is Homer protein homolog 1 (354 aa).

Residues 1–110 (MGEQPIFSTR…EKFQEFKEAA (110 aa)) form the WH1 domain. Residue Gly2 is modified to N-acetylglycine. The segment at 114 to 172 (KEKSQEKMELTSTPSQESAGGDLQSPLTPESINGTDDERTPDLTQNSEPRPEPTQNALP) is disordered. Polar residues-rich tracts occupy residues 138–147 (SPLTPESING) and 155–172 (DLTQ…NALP). Residues 181-352 (KHWEAELATL…LRDNLAKLLE (172 aa)) are a coiled coil. The tract at residues 290-354 (KLQEVEIRNK…DNLAKLLERS (65 aa)) is required for tetramerization. Ser306 carries the phosphoserine modification.

This sequence belongs to the Homer family. As to quaternary structure, tetramer; this tetrameric structure is critical for forming the high-order complex with SHANK1, which in turn is necessary for the structural and functional integrity of dendritic spines. Interacts with GRM1, GRM5, ITPR1, DNM3, RYR1, RYR2 and SHANK3. Interacts with IFT57 and OPHN1. Encodes a coiled-coil structure that mediates homo- and heteromultimerization. Interacts with SHANK1; forms high-order polymerized complex with a mesh-like network structure, at least composed of SHANK1, HOMER1 and DLGAP1; the complex formation is SHANK1 multimerization dependent. Interacts with NFATC4. Interacts with DAGLA (via PPXXF motif); this interaction is required for the cell membrane localization of DAGLA. Interacts with SRGAP2.

It is found in the cytoplasm. The protein localises to the postsynaptic density. It localises to the synapse. Its subcellular location is the cell projection. The protein resides in the dendritic spine. In terms of biological role, postsynaptic density scaffolding protein. Binds and cross-links cytoplasmic regions of GRM1, GRM5, ITPR1, DNM3, RYR1, RYR2, SHANK1 and SHANK3. By physically linking GRM1 and GRM5 with ER-associated ITPR1 receptors, it aids the coupling of surface receptors to intracellular calcium release. May also couple GRM1 to PI3 kinase through its interaction with AGAP2. Forms a high-order complex with SHANK1, which in turn is necessary for the structural and functional integrity of dendritic spines. Negatively regulates T cell activation by inhibiting the calcineurin-NFAT pathway. Acts by competing with calcineurin/PPP3CA for NFAT protein binding, hence preventing NFAT activation by PPP3CA. This chain is Homer protein homolog 1, found in Bos taurus (Bovine).